Here is a 353-residue protein sequence, read N- to C-terminus: Photosystem II D2 protein (353 aa).

N-acetylthreonine is present on T2. The residue at position 2 (T2) is a Phosphothreonine. The chain crosses the membrane as a helical span at residues 41 to 61 (CAYFALGGWFTGTTFVTSWYT). Residue H118 coordinates chlorophyll a. Residues 125-141 (GFMLRQFELARSVQLRP) traverse the membrane as a helical segment. Pheophytin a contacts are provided by Q130 and N143. A helical transmembrane segment spans residues 153–166 (VFVSVFLIYPLGQS). Chlorophyll a is bound at residue H198. Residues 208–228 (AALLCAIHGATVENTLFEDGD) form a helical membrane-spanning segment. Residues H215 and F262 each coordinate a plastoquinone. H215 provides a ligand contact to Fe cation. H269 lines the Fe cation pocket. Residues 279–295 (GLWMSALGVVGLALNLR) traverse the membrane as a helical segment.

The protein belongs to the reaction center PufL/M/PsbA/D family. PSII is composed of 1 copy each of membrane proteins PsbA, PsbB, PsbC, PsbD, PsbE, PsbF, PsbH, PsbI, PsbJ, PsbK, PsbL, PsbM, PsbT, PsbX, PsbY, PsbZ, Psb30/Ycf12, at least 3 peripheral proteins of the oxygen-evolving complex and a large number of cofactors. It forms dimeric complexes. It depends on The D1/D2 heterodimer binds P680, chlorophylls that are the primary electron donor of PSII, and subsequent electron acceptors. It shares a non-heme iron and each subunit binds pheophytin, quinone, additional chlorophylls, carotenoids and lipids. There is also a Cl(-1) ion associated with D1 and D2, which is required for oxygen evolution. The PSII complex binds additional chlorophylls, carotenoids and specific lipids. as a cofactor.

The protein localises to the plastid. It is found in the chloroplast thylakoid membrane. The catalysed reaction is 2 a plastoquinone + 4 hnu + 2 H2O = 2 a plastoquinol + O2. Photosystem II (PSII) is a light-driven water:plastoquinone oxidoreductase that uses light energy to abstract electrons from H(2)O, generating O(2) and a proton gradient subsequently used for ATP formation. It consists of a core antenna complex that captures photons, and an electron transfer chain that converts photonic excitation into a charge separation. The D1/D2 (PsbA/PsbD) reaction center heterodimer binds P680, the primary electron donor of PSII as well as several subsequent electron acceptors. D2 is needed for assembly of a stable PSII complex. This chain is Photosystem II D2 protein, found in Nandina domestica (Heavenly bamboo).